Here is a 227-residue protein sequence, read N- to C-terminus: Octanoyltransferase (227 aa).

The BPL/LPL catalytic domain occupies 47–223 (EDTADEIWLL…HLLRLLPPGV (177 aa)). Substrate is bound by residues 87 to 94 (RGGQITYH), 154 to 156 (ALG), and 167 to 169 (GLA). Cys185 functions as the Acyl-thioester intermediate in the catalytic mechanism.

It belongs to the LipB family.

The protein localises to the cytoplasm. It catalyses the reaction octanoyl-[ACP] + L-lysyl-[protein] = N(6)-octanoyl-L-lysyl-[protein] + holo-[ACP] + H(+). The protein operates within protein modification; protein lipoylation via endogenous pathway; protein N(6)-(lipoyl)lysine from octanoyl-[acyl-carrier-protein]: step 1/2. Its function is as follows. Catalyzes the transfer of endogenously produced octanoic acid from octanoyl-acyl-carrier-protein onto the lipoyl domains of lipoate-dependent enzymes. Lipoyl-ACP can also act as a substrate although octanoyl-ACP is likely to be the physiological substrate. This chain is Octanoyltransferase, found in Azoarcus sp. (strain BH72).